The chain runs to 161 residues: Ribosomal RNA large subunit methyltransferase H (161 aa).

S-adenosyl-L-methionine-binding positions include Leu-78, Gly-110, and 129 to 134; that span reads LSRLTF.

This sequence belongs to the RNA methyltransferase RlmH family. Homodimer.

Its subcellular location is the cytoplasm. The enzyme catalyses pseudouridine(1915) in 23S rRNA + S-adenosyl-L-methionine = N(3)-methylpseudouridine(1915) in 23S rRNA + S-adenosyl-L-homocysteine + H(+). Specifically methylates the pseudouridine at position 1915 (m3Psi1915) in 23S rRNA. This chain is Ribosomal RNA large subunit methyltransferase H, found in Heliobacterium modesticaldum (strain ATCC 51547 / Ice1).